A 245-amino-acid chain; its full sequence is Endonuclease III (245 aa).

One can recognise a HhH domain in the interval 119–138 (MDKLVTLPGVGRKTANVILG). Residues cysteine 198, cysteine 205, cysteine 208, and cysteine 214 each coordinate [4Fe-4S] cluster.

It belongs to the Nth/MutY family. Requires [4Fe-4S] cluster as cofactor.

It carries out the reaction 2'-deoxyribonucleotide-(2'-deoxyribose 5'-phosphate)-2'-deoxyribonucleotide-DNA = a 3'-end 2'-deoxyribonucleotide-(2,3-dehydro-2,3-deoxyribose 5'-phosphate)-DNA + a 5'-end 5'-phospho-2'-deoxyribonucleoside-DNA + H(+). Its function is as follows. DNA repair enzyme that has both DNA N-glycosylase activity and AP-lyase activity. The DNA N-glycosylase activity releases various damaged pyrimidines from DNA by cleaving the N-glycosidic bond, leaving an AP (apurinic/apyrimidinic) site. The AP-lyase activity cleaves the phosphodiester bond 3' to the AP site by a beta-elimination, leaving a 3'-terminal unsaturated sugar and a product with a terminal 5'-phosphate. Has a preference for oxidized pyrimidines, such as thymine glycol (prefers 5S isomers) 5,6-dihydrouracil:G, 5-hydroxyuracil:G, 5-hydroxycytosine:G and urea:A. Cleaves ssDNA containing an AP site. The protein is Endonuclease III of Mycobacterium tuberculosis (strain ATCC 25618 / H37Rv).